The chain runs to 92 residues: Small ribosomal subunit protein uS19 (92 aa).

Belongs to the universal ribosomal protein uS19 family.

In terms of biological role, protein S19 forms a complex with S13 that binds strongly to the 16S ribosomal RNA. The polypeptide is Small ribosomal subunit protein uS19 (Borrelia duttonii (strain Ly)).